The sequence spans 2096 residues: HEAT repeat-containing protein 1 homolog (2096 aa).

Residues 2058-2096 (TVPFIAELLEDEHQRVEKNTRTGVQELETILGESVQKYL) form an HEAT repeat.

It belongs to the HEATR1/UTP10 family. In terms of assembly, part of the small subunit (SSU) processome, composed of more than 70 proteins and the RNA chaperone small nucleolar RNA (snoRNA) U3. Interacts with MYC; the interaction is required for localization of MYC to the nucleolus.

The protein localises to the nucleus. Its subcellular location is the nucleolus. In terms of biological role, ribosome biogenesis factor; required for recruitment of Myc to nucleoli. Involved in nucleolar processing of pre-18S ribosomal RNA. Required for optimal pre-ribosomal RNA transcription by RNA polymerase I. Part of the small subunit (SSU) processome, first precursor of the small eukaryotic ribosomal subunit. During the assembly of the SSU processome in the nucleolus, many ribosome biogenesis factors, an RNA chaperone and ribosomal proteins associate with the nascent pre-rRNA and work in concert to generate RNA folding, modifications, rearrangements and cleavage as well as targeted degradation of pre-ribosomal RNA by the RNA exosome. Involved in neuronal-lineage cell proliferation during larval development. This Drosophila melanogaster (Fruit fly) protein is HEAT repeat-containing protein 1 homolog.